Consider the following 121-residue polypeptide: MARVTVDDCVQHVSNRFELVILAAKRARQLAKGAEPEVSVDRDKNTVVALREIAESKLNMDDLRRMEETVVEEEVVDEVIRFEIADLAVSDDLADGDAANDLQGEEDDLGLGLDEAEDLGF.

A disordered region spans residues 95–121 (DGDAANDLQGEEDDLGLGLDEAEDLGF). Positions 103 to 121 (QGEEDDLGLGLDEAEDLGF) are enriched in acidic residues.

It belongs to the RNA polymerase subunit omega family. In terms of assembly, the RNAP catalytic core consists of 2 alpha, 1 beta, 1 beta' and 1 omega subunit. When a sigma factor is associated with the core the holoenzyme is formed, which can initiate transcription.

It catalyses the reaction RNA(n) + a ribonucleoside 5'-triphosphate = RNA(n+1) + diphosphate. Functionally, promotes RNA polymerase assembly. Latches the N- and C-terminal regions of the beta' subunit thereby facilitating its interaction with the beta and alpha subunits. This is DNA-directed RNA polymerase subunit omega from Magnetococcus marinus (strain ATCC BAA-1437 / JCM 17883 / MC-1).